Here is a 350-residue protein sequence, read N- to C-terminus: Peroxidase 24 (350 aa).

Positions 1–27 are cleaved as a signal peptide; it reads MANKSLEIRFLFPLVLFLVVKLLCVDG. Cystine bridges form between cysteine 55-cysteine 135, cysteine 88-cysteine 93, cysteine 141-cysteine 346, and cysteine 221-cysteine 253. N-linked (GlcNAc...) asparagine glycosylation is present at asparagine 73. Histidine 86 (proton acceptor) is an active-site residue. Aspartate 87, valine 90, glycine 92, aspartate 94, and serine 96 together coordinate Ca(2+). A substrate-binding site is contributed by proline 184. Asparagine 189 carries an N-linked (GlcNAc...) asparagine glycan. Histidine 214 is a binding site for heme b. Residue threonine 215 coordinates Ca(2+). N-linked (GlcNAc...) asparagine glycosylation is present at asparagine 230. Positions 269 and 277 each coordinate Ca(2+).

This sequence belongs to the peroxidase family. Classical plant (class III) peroxidase subfamily. Heme b is required as a cofactor. Requires Ca(2+) as cofactor.

The protein localises to the secreted. The catalysed reaction is 2 a phenolic donor + H2O2 = 2 a phenolic radical donor + 2 H2O. In terms of biological role, removal of H(2)O(2), oxidation of toxic reductants, biosynthesis and degradation of lignin, suberization, auxin catabolism, response to environmental stresses such as wounding, pathogen attack and oxidative stress. These functions might be dependent on each isozyme/isoform in each plant tissue. The polypeptide is Peroxidase 24 (PER24) (Arabidopsis thaliana (Mouse-ear cress)).